Reading from the N-terminus, the 216-residue chain is MTATRNVKGLLGTKLGMTQVWDENNKLIPVTVVQADSNVITQLRNAEVDGYVAVQIGYGQIDPRKVTKPLAGHFEKAGVTPRRHVVELRTADAASYELGQELSVEIFEAGQKIDVVGTSKGKGFAGVMKRHGFHGVGASHGAHKNHRKPGSIGGASTPSRVFKGLKMAGRMGAERHTTLNLTVHAIDAEKSLLLIKGAVPGARGQVVLVRTAVKGA.

The segment at 137–157 (GASHGAHKNHRKPGSIGGAST) is disordered.

It belongs to the universal ribosomal protein uL3 family. In terms of assembly, part of the 50S ribosomal subunit. Forms a cluster with proteins L14 and L19.

Its function is as follows. One of the primary rRNA binding proteins, it binds directly near the 3'-end of the 23S rRNA, where it nucleates assembly of the 50S subunit. This chain is Large ribosomal subunit protein uL3, found in Paenarthrobacter aurescens (strain TC1).